Reading from the N-terminus, the 418-residue chain is UDP-N-acetylglucosamine 1-carboxyvinyltransferase (418 aa).

23–24 (KN) is a binding site for phosphoenolpyruvate. Residue Arg-93 coordinates UDP-N-acetyl-alpha-D-glucosamine. Asp-117 serves as the catalytic Proton donor. UDP-N-acetyl-alpha-D-glucosamine contacts are provided by Asp-305 and Val-327.

Belongs to the EPSP synthase family. MurA subfamily.

It is found in the cytoplasm. It carries out the reaction phosphoenolpyruvate + UDP-N-acetyl-alpha-D-glucosamine = UDP-N-acetyl-3-O-(1-carboxyvinyl)-alpha-D-glucosamine + phosphate. The protein operates within cell wall biogenesis; peptidoglycan biosynthesis. Its function is as follows. Cell wall formation. Adds enolpyruvyl to UDP-N-acetylglucosamine. In Mycobacterium leprae (strain TN), this protein is UDP-N-acetylglucosamine 1-carboxyvinyltransferase.